The following is a 451-amino-acid chain: Protein-tyrosine kinase 6 (451 aa).

Positions 8–72 (HLGPKYVGLW…PHNYLAERET (65 aa)) constitute an SH3 domain. Residues Tyr-13, Tyr-61, Tyr-66, and Tyr-114 each carry the phosphotyrosine; by autocatalysis modification. One can recognise an SH2 domain in the interval 78 to 170 (WFFGCISRSE…SHGLRLAAPC (93 aa)). Residues 171–190 (RKHEPEPLPHWDDWERPREE) are linker. In terms of domain architecture, Protein kinase spans 191–445 (FTLCRKLGSG…ALRERLSSFT (255 aa)). ATP contacts are provided by residues 197 to 205 (LGSGYFGEV) and Lys-219. Asp-312 functions as the Proton acceptor in the catalytic mechanism. 2 positions are modified to phosphotyrosine; by autocatalysis: Tyr-342 and Tyr-351. At Tyr-447 the chain carries Phosphotyrosine.

The protein belongs to the protein kinase superfamily. Tyr protein kinase family. BRK/PTK6/SIK subfamily. Interacts with GAP-A.p65. Interacts (via SH3 and SH2 domains) with KHDRBS1. Interacts (via SH3 and SH2 domains) with phosphorylated IRS4. Interacts with ADAM15. Interacts (via SH3 domain) with SFPQ. Interacts with EGFR and ERBB2. Interacts with STAP2. Interacts with PNX. Interacts with SFPQ. Interacts with PTK/ATK. Interacts with CTNNB1. Autophosphorylated. Autophosphorylation of Tyr-342 leads to an increase of kinase activity. Tyr-447 binds to the SH2 domain when phosphorylated and negatively regulates kinase activity. Epithelia-specific. Very high level in colon and high levels in small intestine and prostate, and low levels in some fetal tissues. Not expressed in breast or ovarian tissue but expressed in high percentage of breast and ovarian cancers. Also overexpressed in some metastatic melanomas, lymphomas, colon cancers, squamous cell carcinomas and prostate cancers. Also found in melanocytes. Not expressed in heart, brain, placenta, lung, liver, skeletal muscle, kidney and pancreas. Isoform 2 is present in prostate epithelial cell lines derived from normal prostate and prostate adenocarcinomas, as well as in a variety of cell lines.

It localises to the cytoplasm. The protein resides in the nucleus. Its subcellular location is the cell projection. It is found in the ruffle. The protein localises to the membrane. The enzyme catalyses L-tyrosyl-[protein] + ATP = O-phospho-L-tyrosyl-[protein] + ADP + H(+). Its activity is regulated as follows. Activated by EGF, NRG1 and IGF1. Inhibited by SOCS3 to phosphorylate STAT3. Stabilized in the inactive form by an association between the SH3 domain and the SH2-TK linker region. Interaction between Trp-184 within SH2-TK linker region and the catalytic domain appears essential for positive regulation of kinase activity. In terms of biological role, non-receptor tyrosine-protein kinase implicated in the regulation of a variety of signaling pathways that control the differentiation and maintenance of normal epithelia, as well as tumor growth. Function seems to be context dependent and differ depending on cell type, as well as its intracellular localization. A number of potential nuclear and cytoplasmic substrates have been identified. These include the RNA-binding proteins: KHDRBS1/SAM68, KHDRBS2/SLM1, KHDRBS3/SLM2 and SFPQ/PSF; transcription factors: STAT3 and STAT5A/B and a variety of signaling molecules: ARHGAP35/p190RhoGAP, PXN/paxillin, BTK/ATK, STAP2/BKS. Phosphorylates the GTPase-activating protein ARAP1 following EGF stimulation which enhances EGFR signaling by delaying EGFR down-regulation. Also associates with a variety of proteins that are likely upstream of PTK6 in various signaling pathways, or for which PTK6 may play an adapter-like role. These proteins include ADAM15, EGFR, ERBB2, ERBB3 and IRS4. In normal or non-tumorigenic tissues, PTK6 promotes cellular differentiation and apoptosis. In tumors PTK6 contributes to cancer progression by sensitizing cells to mitogenic signals and enhancing proliferation, anchorage-independent survival and migration/invasion. Association with EGFR, ERBB2, ERBB3 may contribute to mammary tumor development and growth through enhancement of EGF-induced signaling via BTK/AKT and PI3 kinase. Contributes to migration and proliferation by contributing to EGF-mediated phosphorylation of ARHGAP35/p190RhoGAP, which promotes association with RASA1/p120RasGAP, inactivating RhoA while activating RAS. EGF stimulation resulted in phosphorylation of PNX/Paxillin by PTK6 and activation of RAC1 via CRK/CrKII, thereby promoting migration and invasion. PTK6 activates STAT3 and STAT5B to promote proliferation. Nuclear PTK6 may be important for regulating growth in normal epithelia, while cytoplasmic PTK6 might activate oncogenic signaling pathways. Its function is as follows. Inhibits PTK6 phosphorylation and PTK6 association with other tyrosine-phosphorylated proteins. In Homo sapiens (Human), this protein is Protein-tyrosine kinase 6 (PTK6).